A 136-amino-acid polypeptide reads, in one-letter code: Small ribosomal subunit protein uS8c (136 aa).

The protein belongs to the universal ribosomal protein uS8 family. As to quaternary structure, part of the 30S ribosomal subunit.

Its subcellular location is the plastid. The protein resides in the chloroplast. One of the primary rRNA binding proteins, it binds directly to 16S rRNA central domain where it helps coordinate assembly of the platform of the 30S subunit. This chain is Small ribosomal subunit protein uS8c (rps8), found in Tetradesmus obliquus (Green alga).